We begin with the raw amino-acid sequence, 423 residues long: Elongation factor 1-alpha (423 aa).

Residues 5 to 211 enclose the tr-type G domain; the sequence is KEHINLAFIG…DNLEPPEKPT (207 aa). The G1 stretch occupies residues 14 to 21; sequence GHVDHGKS. 14–21 provides a ligand contact to GTP; that stretch reads GHVDHGKS. Position 21 (serine 21) interacts with Mg(2+). Residues 60–64 form a G2 region; it reads GVTID. The G3 stretch occupies residues 81-84; it reads DCPG. GTP contacts are provided by residues 81 to 85 and 136 to 139; these read DCPGH and NKMD. Residues 136-139 are G4; that stretch reads NKMD. Residues 175 to 177 are G5; sequence SAF.

Belongs to the TRAFAC class translation factor GTPase superfamily. Classic translation factor GTPase family. EF-Tu/EF-1A subfamily.

The protein localises to the cytoplasm. The enzyme catalyses GTP + H2O = GDP + phosphate + H(+). In terms of biological role, GTP hydrolase that promotes the GTP-dependent binding of aminoacyl-tRNA to the A-site of ribosomes during protein biosynthesis. The chain is Elongation factor 1-alpha from Methanopyrus kandleri (strain AV19 / DSM 6324 / JCM 9639 / NBRC 100938).